The primary structure comprises 259 residues: Synaptophysin-like protein 1 (259 aa).

The Cytoplasmic segment spans residues 1–33 (MAPNIYLVRQRISRLGQRMSGFQINLNPLKEPL). In terms of domain architecture, MARVEL spans 28 to 237 (PLKEPLGFIK…NAWFVYKETS (210 aa)). A helical transmembrane segment spans residues 34–54 (GFIKVLEWIASIFAFATCGGF). Topologically, residues 55 to 116 (KGQTEIQVNC…LIGDYSSSAQ (62 aa)) are vesicular. N-linked (GlcNAc...) asparagine glycosylation is present at Asn71. A helical transmembrane segment spans residues 117-137 (FYVTFAVFVFLYCIAALLLYV). The Cytoplasmic portion of the chain corresponds to 138–150 (GYTSLYLDSRKLP). The helical transmembrane segment at 151–171 (MIDFVVTLVATFLWLVSTSAW) threads the bilayer. Residues 172–212 (AKALTDIKIATGHNIIDELPPCKKKAVLCYFGSVTSMGSLN) lie on the Vesicular side of the membrane. Asn212 carries an N-linked (GlcNAc...) asparagine glycan. The chain crosses the membrane as a helical span at residues 213–233 (VSVIFGFLNMILWGGNAWFVY). Residues 234–259 (KETSLHSPSNTSAPHSQGGIPPPTGI) are Cytoplasmic-facing.

The protein belongs to the synaptophysin/synaptobrevin family.

It is found in the cytoplasmic vesicle membrane. The protein localises to the melanosome. The polypeptide is Synaptophysin-like protein 1 (SYPL1) (Homo sapiens (Human)).